The following is a 215-amino-acid chain: MDTTDRTAEVVLVDYGLGNLRSVTRGLERAGAEVTLSADPDDFSAADGIVLPGVGAFSEGMENAGPFREALVAAAADGQPLFGICLGMQMLLTSSEEAETVGQGDVRGLDLVPGRNVRFDEGQKVPHMGWNELNVARDHPIVEGIDGEYAYFVHSYYAAPDDDAAVVATTDYSVEFPAIVANEAGNVFGTQFHPEKSGETGLQILQNFVDYCLER.

Residues 9 to 215 (EVVLVDYGLG…QNFVDYCLER (207 aa)) enclose the Glutamine amidotransferase type-1 domain. Cys85 (nucleophile) is an active-site residue. Active-site residues include His193 and Glu195.

As to quaternary structure, heterodimer of HisH and HisF.

It localises to the cytoplasm. The enzyme catalyses 5-[(5-phospho-1-deoxy-D-ribulos-1-ylimino)methylamino]-1-(5-phospho-beta-D-ribosyl)imidazole-4-carboxamide + L-glutamine = D-erythro-1-(imidazol-4-yl)glycerol 3-phosphate + 5-amino-1-(5-phospho-beta-D-ribosyl)imidazole-4-carboxamide + L-glutamate + H(+). The catalysed reaction is L-glutamine + H2O = L-glutamate + NH4(+). It functions in the pathway amino-acid biosynthesis; L-histidine biosynthesis; L-histidine from 5-phospho-alpha-D-ribose 1-diphosphate: step 5/9. IGPS catalyzes the conversion of PRFAR and glutamine to IGP, AICAR and glutamate. The HisH subunit catalyzes the hydrolysis of glutamine to glutamate and ammonia as part of the synthesis of IGP and AICAR. The resulting ammonia molecule is channeled to the active site of HisF. This Natronomonas pharaonis (strain ATCC 35678 / DSM 2160 / CIP 103997 / JCM 8858 / NBRC 14720 / NCIMB 2260 / Gabara) (Halobacterium pharaonis) protein is Imidazole glycerol phosphate synthase subunit HisH.